Here is a 116-residue protein sequence, read N- to C-terminus: Protein Rev (116 aa).

Ser-5 and Ser-8 each carry phosphoserine; by host CK2. A homomultimerization region spans residues Cys-18–Asn-26. The segment at Pro-27 to Ala-47 is disordered. The Nuclear localization signal and RNA-binding (RRE) motif lies at Thr-34–Arg-50. A compositionally biased stretch (basic residues) spans Gln-36–Ala-47. Residues Leu-73–Asn-84 carry the Nuclear export signal and binding to XPO1 motif. The segment at Glu-87–Glu-116 is disordered. Ser-99 carries the post-translational modification Phosphoserine; by host.

This sequence belongs to the HIV-1 REV protein family. In terms of assembly, homomultimer; when bound to the RRE. Multimeric assembly is essential for activity and may involve XPO1. Binds to human KPNB1, XPO1, TNPO1, RANBP5 and IPO7. Interacts with the viral Integrase. Interacts with human KHDRBS1. Interacts with human NAP1; this interaction decreases Rev multimerization and stimulates its activity. Interacts with human DEAD-box helicases DDX3 and DDX24; these interactions may serve for viral RNA export to the cytoplasm and packaging, respectively. Interacts with human PSIP1; this interaction may inhibit HIV-1 DNA integration by promoting dissociation of the Integrase-LEDGF/p75 complex. Asymmetrically arginine dimethylated at one site by host PRMT6. Methylation impairs the RNA-binding activity and export of viral RNA from the nucleus to the cytoplasm. Post-translationally, phosphorylated by protein kinase CK2. Presence of, and maybe binding to the N-terminus of the regulatory beta subunit of CK2 is necessary for CK2-mediated Rev's phosphorylation.

The protein resides in the host nucleus. It is found in the host nucleolus. The protein localises to the host cytoplasm. Escorts unspliced or incompletely spliced viral pre-mRNAs (late transcripts) out of the nucleus of infected cells. These pre-mRNAs carry a recognition sequence called Rev responsive element (RRE) located in the env gene, that is not present in fully spliced viral mRNAs (early transcripts). This function is essential since most viral proteins are translated from unspliced or partially spliced pre-mRNAs which cannot exit the nucleus by the pathway used by fully processed cellular mRNAs. Rev itself is translated from a fully spliced mRNA that readily exits the nucleus. Rev's nuclear localization signal (NLS) binds directly to KPNB1/Importin beta-1 without previous binding to KPNA1/Importin alpha-1. KPNB1 binds to the GDP bound form of RAN (Ran-GDP) and targets Rev to the nucleus. In the nucleus, the conversion from Ran-GDP to Ran-GTP dissociates Rev from KPNB1 and allows Rev's binding to the RRE in viral pre-mRNAs. Rev multimerization on the RRE via cooperative assembly exposes its nuclear export signal (NES) to the surface. Rev can then form a complex with XPO1/CRM1 and Ran-GTP, leading to nuclear export of the complex. Conversion from Ran-GTP to Ran-GDP mediates dissociation of the Rev/RRE/XPO1/RAN complex, so that Rev can return to the nucleus for a subsequent round of export. Beside KPNB1, also seems to interact with TNPO1/Transportin-1, RANBP5/IPO5 and IPO7/RANBP7 for nuclear import. The nucleoporin-like HRB/RIP is an essential cofactor that probably indirectly interacts with Rev to release HIV RNAs from the perinuclear region to the cytoplasm. This chain is Protein Rev, found in Human immunodeficiency virus type 1 group M subtype F1 (isolate VI850) (HIV-1).